The following is a 96-amino-acid chain: Putative pterin-4-alpha-carbinolamine dehydratase (96 aa).

Belongs to the pterin-4-alpha-carbinolamine dehydratase family.

The catalysed reaction is (4aS,6R)-4a-hydroxy-L-erythro-5,6,7,8-tetrahydrobiopterin = (6R)-L-erythro-6,7-dihydrobiopterin + H2O. The chain is Putative pterin-4-alpha-carbinolamine dehydratase from Rhodospirillum rubrum (strain ATCC 11170 / ATH 1.1.1 / DSM 467 / LMG 4362 / NCIMB 8255 / S1).